Consider the following 122-residue polypeptide: Phosphoribosyl-ATP pyrophosphatase (122 aa).

The protein belongs to the PRA-PH family.

Its subcellular location is the cytoplasm. It catalyses the reaction 1-(5-phospho-beta-D-ribosyl)-ATP + H2O = 1-(5-phospho-beta-D-ribosyl)-5'-AMP + diphosphate + H(+). It functions in the pathway amino-acid biosynthesis; L-histidine biosynthesis; L-histidine from 5-phospho-alpha-D-ribose 1-diphosphate: step 2/9. The chain is Phosphoribosyl-ATP pyrophosphatase from Burkholderia thailandensis (strain ATCC 700388 / DSM 13276 / CCUG 48851 / CIP 106301 / E264).